A 152-amino-acid chain; its full sequence is Protein X (152 aa).

The interval proline 68–phenylalanine 115 is mitochondrial targeting sequence.

This sequence belongs to the orthohepadnavirus protein X family. In terms of assembly, may form homodimer. May interact with host CEBPA, CFLAR, CREB1, DDB1, E4F1, HBXIP, HSPD1/HSP60, NFKBIA, POLR2E and SMAD4. Interacts with host SMC5-SMC6 complex and induces its degradation. Interacts with host TRPC4AP; leading to prevent ubiquitination of TRPC4AP. Interacts with host PLSCR1; this interaction promotes ubiquitination and degradation of HBx and impairs HBx-mediated cell proliferation. Post-translationally, a fraction may be phosphorylated in insect cells and HepG2 cells, a human hepatoblastoma cell line. Phosphorylated in vitro by host protein kinase C or mitogen-activated protein kinase. N-acetylated in insect cells.

It is found in the host cytoplasm. The protein localises to the host nucleus. The protein resides in the host mitochondrion. Functionally, multifunctional protein that plays a role in silencing host antiviral defenses and promoting viral transcription. Does not seem to be essential for HBV infection. May be directly involved in development of cirrhosis and liver cancer (hepatocellular carcinoma). Most of cytosolic activities involve modulation of cytosolic calcium. The effect on apoptosis is controversial depending on the cell types in which the studies have been conducted. May induce apoptosis by localizing in mitochondria and causing loss of mitochondrial membrane potential. May also modulate apoptosis by binding host CFLAR, a key regulator of the death-inducing signaling complex (DISC). Promotes viral transcription by using the host E3 ubiquitin ligase DDB1 to target the SMC5-SMC6 complex to proteasomal degradation. This host complex would otherwise bind to viral episomal DNA, and prevents its transcription. Moderately stimulates transcription of many different viral and cellular transcription elements. Promoters and enhancers stimulated by HBx contain DNA binding sites for NF-kappa-B, AP-1, AP-2, c-EBP, ATF/CREB, or the calcium-activated factor NF-AT. The sequence is that of Protein X from Lagothrix lagotricha (Brown woolly monkey).